Here is a 255-residue protein sequence, read N- to C-terminus: CCAAT/enhancer-binding protein delta (255 aa).

Disordered regions lie at residues 1–42 (MTCA…AAPA), 91–121 (GGPARLGGPGPAPRPLKREPDWGDGDAPGSL), and 138–206 (PAAQ…QEMQ). Residue K107 forms a Glycyl lysine isopeptide (Lys-Gly) (interchain with G-Cter in SUMO) linkage. Pro residues predominate over residues 141-161 (QPTPPASPDPPRRSPAPPAPG). Basic and acidic residues predominate over residues 163-187 (ARDKAAGKRGPDRGSPEYRQRRERN). The bZIP domain maps to 177–240 (SPEYRQRRER…AGLRRFFKQL (64 aa)). The basic motif stretch occupies residues 181–208 (RQRRERNNIAVRKSRDKAKRRNQEMQQK). The interval 212 to 240 (LSAENEKLQQRVEQLTRDLAGLRRFFKQL) is leucine-zipper.

It belongs to the bZIP family. C/EBP subfamily. Binds DNA as a homodimer and as a heterodimer. Can form stable heterodimers with CEBPA, CEBPB and CEBPE. Directly interacts with SPI1/PU.1; this interaction does not affect DNA-binding properties of each partner. Interacts with PRDM16.

It localises to the nucleus. Functionally, transcription activator that recognizes two different DNA motifs: the CCAAT homology common to many promoters and the enhanced core homology common to many enhancers. Important transcription factor regulating the expression of genes involved in immune and inflammatory responses. Transcriptional activator that enhances IL6 transcription alone and as heterodimer with CEBPB. This Ovis aries (Sheep) protein is CCAAT/enhancer-binding protein delta (CEBPD).